We begin with the raw amino-acid sequence, 182 residues long: Large ribosomal subunit protein uL10 (182 aa).

This sequence belongs to the universal ribosomal protein uL10 family. As to quaternary structure, part of the ribosomal stalk of the 50S ribosomal subunit. The N-terminus interacts with L11 and the large rRNA to form the base of the stalk. The C-terminus forms an elongated spine to which L12 dimers bind in a sequential fashion forming a multimeric L10(L12)X complex.

In terms of biological role, forms part of the ribosomal stalk, playing a central role in the interaction of the ribosome with GTP-bound translation factors. This is Large ribosomal subunit protein uL10 from Parafrankia sp. (strain EAN1pec).